A 136-amino-acid chain; its full sequence is Large-conductance mechanosensitive channel (136 aa).

Transmembrane regions (helical) follow at residues 10–30 (FAMR…AAFG) and 76–96 (GVFI…FMAI).

Belongs to the MscL family. In terms of assembly, homopentamer.

Its subcellular location is the cell inner membrane. Channel that opens in response to stretch forces in the membrane lipid bilayer. May participate in the regulation of osmotic pressure changes within the cell. The polypeptide is Large-conductance mechanosensitive channel (Shigella boydii serotype 18 (strain CDC 3083-94 / BS512)).